A 32-amino-acid chain; its full sequence is Cytochrome b6-f complex subunit 7 (32 aa).

Residues 9–27 (AVVFWVLIPVGLAGGALLL) traverse the membrane as a helical segment.

It belongs to the PetM family. The 4 large subunits of the cytochrome b6-f complex are cytochrome b6, subunit IV (17 kDa polypeptide, PetD), cytochrome f and the Rieske protein, while the 4 small subunits are PetG, PetL, PetM and PetN. The complex functions as a dimer.

It is found in the cellular thylakoid membrane. Component of the cytochrome b6-f complex, which mediates electron transfer between photosystem II (PSII) and photosystem I (PSI), cyclic electron flow around PSI, and state transitions. The polypeptide is Cytochrome b6-f complex subunit 7 (Synechococcus sp. (strain CC9311)).